Consider the following 208-residue polypeptide: 3-isopropylmalate dehydratase small subunit (208 aa).

The protein belongs to the LeuD family. LeuD type 1 subfamily. In terms of assembly, heterodimer of LeuC and LeuD.

It catalyses the reaction (2R,3S)-3-isopropylmalate = (2S)-2-isopropylmalate. It functions in the pathway amino-acid biosynthesis; L-leucine biosynthesis; L-leucine from 3-methyl-2-oxobutanoate: step 2/4. Catalyzes the isomerization between 2-isopropylmalate and 3-isopropylmalate, via the formation of 2-isopropylmaleate. The protein is 3-isopropylmalate dehydratase small subunit of Gluconobacter oxydans (strain 621H) (Gluconobacter suboxydans).